Consider the following 248-residue polypeptide: tRNA (guanine-N(7)-)-methyltransferase (248 aa).

4 residues coordinate S-adenosyl-L-methionine: Glu-80, Glu-105, Asp-132, and Asp-155. Residue Asp-155 is part of the active site. Substrate is bound by residues Lys-159, Asp-191, and 223-226 (TKFE).

It belongs to the class I-like SAM-binding methyltransferase superfamily. TrmB family.

It carries out the reaction guanosine(46) in tRNA + S-adenosyl-L-methionine = N(7)-methylguanosine(46) in tRNA + S-adenosyl-L-homocysteine. It participates in tRNA modification; N(7)-methylguanine-tRNA biosynthesis. Catalyzes the formation of N(7)-methylguanine at position 46 (m7G46) in tRNA. This is tRNA (guanine-N(7)-)-methyltransferase from Nocardioides sp. (strain ATCC BAA-499 / JS614).